A 62-amino-acid polypeptide reads, in one-letter code: Large ribosomal subunit protein bL28 (62 aa).

It belongs to the bacterial ribosomal protein bL28 family.

This is Large ribosomal subunit protein bL28 from Helicobacter acinonychis (strain Sheeba).